A 1205-amino-acid chain; its full sequence is Nitric oxide synthase 3 (1205 aa).

The disordered stretch occupies residues 1–73 (MGNLKSVGQE…PPEGPKFPRV (73 aa)). G2 carries N-myristoyl glycine lipidation. 2 S-palmitoyl cysteine lipidation sites follow: C15 and C26. Positions 15–27 (CGLGLGLGLGLCG) are enriched in gly residues. Pro residues predominate over residues 33 to 47 (SPAPEPSRAPAPATP). Positions 96 and 101 each coordinate Zn(2+). The tract at residues 100–488 (CCLGSLVLPR…PDPWKGSATK (389 aa)) is interaction with NOSIP. S104 serves as a coordination point for (6R)-L-erythro-5,6,7,8-tetrahydrobiopterin. The residue at position 116 (S116) is a Phosphoserine; by CDK5. Residue C186 coordinates heme b. L-arginine is bound by residues Q249, W358, Y359, E363, and N368. Positions 448, 449, and 462 each coordinate (6R)-L-erythro-5,6,7,8-tetrahydrobiopterin. A heme b-binding site is contributed by Y477. Residues 492 to 512 (ITRKKTFKEVANAVKISASLM) form a calmodulin-binding region. T497 carries the post-translational modification Phosphothreonine; by AMPK and PKA. Residues 522-705 (ATILYASETG…AFRGWAKAAF (184 aa)) form the Flavodoxin-like domain. FMN is bound by residues S528, E529, T530, R532, S574, and T575. Residues S617, S635, and S640 each carry the phosphoserine modification. S656, C663, E689, and Q693 together coordinate FMN. Positions 758 to 1004 (RKMFQATVLS…IRGAPSFRLP (247 aa)) constitute an FAD-binding FR-type domain. An NADP(+)-binding site is contributed by R778. FAD is bound at residue H800. The disordered stretch occupies residues 820-847 (EDPPPPTESVAVEQLEKGSPGGPPPSWV). S838 is modified (phosphoserine). The FAD site is built by R940, Y942, S943, T958, A960, Y964, V977, C978, and S979. Positions 1018, 1051, 1080, 1081, 1087, 1089, and 1091 each coordinate NADP(+). Position 1177 is a phosphothreonine (T1177). The residue at position 1179 (S1179) is a Phosphoserine; by AMPK, PDPK1 and PKA. S1181 is subject to Phosphoserine.

Belongs to the NOS family. In terms of assembly, homodimer. Interacts with NOSIP and NOSTRIN. Interacts with HSP90AB1. Forms a complex with ASL, ASS1 and SLC7A1; the complex regulates cell-autonomous L-arginine synthesis and citrulline recycling while channeling extracellular L-arginine to nitric oxide synthesis pathway. The cofactor is heme b. It depends on FAD as a cofactor. FMN is required as a cofactor. Requires (6R)-L-erythro-5,6,7,8-tetrahydrobiopterin as cofactor. In terms of processing, phosphorylation by AMPK at Ser-1179 in the presence of Ca(2+)-calmodulin (CaM) activates activity. In absence of Ca(2+)-calmodulin, AMPK also phosphorylates Thr-497, resulting in inhibition of activity. Phosphorylation of Ser-116 by CDK5 reduces activity.

The protein resides in the cell membrane. It localises to the membrane. Its subcellular location is the caveola. The protein localises to the cytoplasm. It is found in the cytoskeleton. The protein resides in the golgi apparatus. The catalysed reaction is 2 L-arginine + 3 NADPH + 4 O2 + H(+) = 2 L-citrulline + 2 nitric oxide + 3 NADP(+) + 4 H2O. With respect to regulation, stimulated by calcium/calmodulin. Inhibited by NOSIP and NOSTRIN. Its function is as follows. Produces nitric oxide (NO) which is implicated in vascular smooth muscle relaxation through a cGMP-mediated signal transduction pathway. NO mediates vascular endothelial growth factor (VEGF)-induced angiogenesis in coronary vessels and promotes blood clotting through the activation of platelets. This is Nitric oxide synthase 3 (NOS3) from Bos taurus (Bovine).